Here is a 380-residue protein sequence, read N- to C-terminus: MAPNLRKSHPLLKLINNSLIDLPTPSNISAWWNFGSLLGICLLTQILTGLLLATHYTADTTLAFSSVAHTCRNVQYGWLIRNLHANGASFFFICIYLHIGRGFYYGSYLNKETWNTGIILLLALMATAFVGYVLPWGQMSFWGATVITNLFSAIPYIGQTLVEWAWGGFSVDNPTLTRFFALHFLLPFMIAGLAFIHLTFLHESGSNNPLGIPSNCDKIPFHPYFSLKDILGFIVMFLPLTTLALFSPNLLGDPENFTPANPLVTPPHIKPEWYFLFAYAILRSIPNKLGGVLALAASVLVLFLTPLLHKSKQRAMTFRPFSQFLFWTLVANLFILTWVGSQPVEHPFIIIGQLASLTYFTILLLLFPIIGALENKMLNY.

A run of 4 helical transmembrane segments spans residues phenylalanine 34–threonine 54, tryptophan 78–isoleucine 99, tryptophan 114–leucine 134, and phenylalanine 179–threonine 199. Residues histidine 84 and histidine 98 each contribute to the heme b site. The heme b site is built by histidine 183 and histidine 197. An a ubiquinone-binding site is contributed by histidine 202. A run of 4 helical transmembrane segments spans residues leucine 227 to serine 247, leucine 289 to histidine 309, phenylalanine 321 to serine 341, and phenylalanine 348 to proline 368.

It belongs to the cytochrome b family. As to quaternary structure, the cytochrome bc1 complex contains 11 subunits: 3 respiratory subunits (MT-CYB, CYC1 and UQCRFS1), 2 core proteins (UQCRC1 and UQCRC2) and 6 low-molecular weight proteins (UQCRH/QCR6, UQCRB/QCR7, UQCRQ/QCR8, UQCR10/QCR9, UQCR11/QCR10 and a cleavage product of UQCRFS1). This cytochrome bc1 complex then forms a dimer. It depends on heme b as a cofactor.

Its subcellular location is the mitochondrion inner membrane. In terms of biological role, component of the ubiquinol-cytochrome c reductase complex (complex III or cytochrome b-c1 complex) that is part of the mitochondrial respiratory chain. The b-c1 complex mediates electron transfer from ubiquinol to cytochrome c. Contributes to the generation of a proton gradient across the mitochondrial membrane that is then used for ATP synthesis. The sequence is that of Cytochrome b (MT-CYB) from Alle alle (Dovekie).